Reading from the N-terminus, the 92-residue chain is UPF0250 protein XOO3732 (92 aa).

It belongs to the UPF0250 family.

This Xanthomonas oryzae pv. oryzae (strain MAFF 311018) protein is UPF0250 protein XOO3732.